Reading from the N-terminus, the 462-residue chain is Argininosuccinate lyase (462 aa).

Belongs to the lyase 1 family. Argininosuccinate lyase subfamily.

It is found in the cytoplasm. It catalyses the reaction 2-(N(omega)-L-arginino)succinate = fumarate + L-arginine. It participates in amino-acid biosynthesis; L-arginine biosynthesis; L-arginine from L-ornithine and carbamoyl phosphate: step 3/3. This Dechloromonas aromatica (strain RCB) protein is Argininosuccinate lyase.